A 174-amino-acid chain; its full sequence is MATVAELKAVLKDTLEKKGVLGHLKARIRAEVFNALDDDREPRPSLSHENLLINELIREYLEFNKYKYTASVLIAESGQPVVPLDRQFLIHELNAFEESKDNTIPLLYGILAHFLRGTKDGIQNAFLKGPSLQPSDPSLGRQPSRRKPMDDHLRKEEQKSTNIEDLHVSQAVNR.

The segment at 1–104 (MATVAELKAV…AFEESKDNTI (104 aa)) is necessary and sufficient for homooligomerization and localization to centrosomes and pericentriolar satellites. Residues 49–81 (ENLLINELIREYLEFNKYKYTASVLIAESGQPV) form the LisH domain. The tract at residues 129–174 (GPSLQPSDPSLGRQPSRRKPMDDHLRKEEQKSTNIEDLHVSQAVNR) is disordered. Ser144 carries the post-translational modification Phosphoserine. Residues 147–167 (KPMDDHLRKEEQKSTNIEDLH) show a composition bias toward basic and acidic residues.

Belongs to the CEP43 family. As to quaternary structure, homooligomer; probably required for localization to centrosomes. Forms a complex with KIAA0753/OFIP and OFD1; within this complex may stabilize the interaction between OFD1 and KIAA0753/OFIP. Interacts with PCM1; this interaction may be mediated by KIAA0753/OFIP. Interacts with PLK1 in later G1, S, G2 and M phases of the cell cycle; this interaction recruits PLK1 to centrosomes. In terms of tissue distribution, widely expressed. Detected in brain, heart, kidney, liver, lung, skeletal muscle, placenta and intestine.

It is found in the cytoplasm. The protein resides in the cytoskeleton. The protein localises to the microtubule organizing center. Its subcellular location is the centrosome. It localises to the centriole. It is found in the cell projection. The protein resides in the cilium. The protein localises to the cilium basal body. Its subcellular location is the cytoplasmic granule. It localises to the centriolar satellite. Involved in the biogenesis of cilia. Required for the recruitment of PLK1 to centrosomes and S phase progression. This chain is Centrosomal protein 20, found in Homo sapiens (Human).